The following is a 579-amino-acid chain: V-type ATP synthase alpha chain (579 aa).

227–234 (GGFGTGKT) contacts ATP.

The protein belongs to the ATPase alpha/beta chains family.

It catalyses the reaction ATP + H2O + 4 H(+)(in) = ADP + phosphate + 5 H(+)(out). Produces ATP from ADP in the presence of a proton gradient across the membrane. The V-type alpha chain is a catalytic subunit. In Anaeromyxobacter dehalogenans (strain 2CP-C), this protein is V-type ATP synthase alpha chain.